The following is a 476-amino-acid chain: uncharacterized protein (476 aa).

Residues 147–204 (DVRLAELRRRRAELEAEIAAVEAGDIAVLDPTAVRDRYQQLSTTARELLSDFREVEEN) are a coiled coil.

This is an uncharacterized protein from Mycolicibacterium smegmatis (strain ATCC 700084 / mc(2)155) (Mycobacterium smegmatis).